The primary structure comprises 416 residues: Enterobactin exporter EntS (416 aa).

At 1 to 21 the chain is on the cytoplasmic side; it reads MNKQSWLLNLSLLKTHPAFRA. A helical membrane pass occupies residues 22–42; that stretch reads VFLARFISIVSLGLLGVAVPV. Topologically, residues 43 to 55 are periplasmic; that stretch reads QIQMMTHSTWQVG. Residues 56–76 traverse the membrane as a helical segment; the sequence is LSVTLTGGAMFVGLMVGGVLA. Residues 77-83 lie on the Cytoplasmic side of the membrane; it reads DRYERKK. Residues 84–104 traverse the membrane as a helical segment; it reads VILLARGTCGIGFIGLCLNAL. Over 105-109 the chain is Periplasmic; that stretch reads LPEPS. The chain crosses the membrane as a helical span at residues 110-130; it reads LLAIYLLGLWDGFFASLGVTA. Topologically, residues 131 to 156 are cytoplasmic; it reads LLAATPALVGRENLMQAGAITMLTVR. Residues 157–177 traverse the membrane as a helical segment; it reads LGSVISPMIGGLLLATGGVAW. Position 178 (N178) is a topological domain, periplasmic. The chain crosses the membrane as a helical span at residues 179-199; it reads YGLAAAGTFITLLPLLSLPAL. Residues 200–218 lie on the Cytoplasmic side of the membrane; it reads PPPPQPREHPLKSLLAGFR. Residues 219–239 form a helical membrane-spanning segment; that stretch reads FLLASPLVGGIALLGGLLTMA. Topologically, residues 240 to 256 are periplasmic; it reads SAVRVLYPALADNWQMS. The chain crosses the membrane as a helical span at residues 257–277; the sequence is AAQIGFLYAAIPLGAAIGALT. Residues 278–287 are Cytoplasmic-facing; that stretch reads SGKLAHSARP. Residues 288–307 form a helical membrane-spanning segment; sequence GLLMLLSTLGSFLAIGLFGL. Residues 308–313 lie on the Periplasmic side of the membrane; the sequence is MPMWIL. A helical membrane pass occupies residues 314–336; the sequence is GVVCLALFGWLSAVSSLLQYTML. The Cytoplasmic segment spans residues 337-356; that stretch reads QTQTPEAMLGRINGLWTAQN. The chain crosses the membrane as a helical span at residues 357–377; the sequence is VTGDAIGAALLGGLGAMMTPV. Residue A378 is a topological domain, periplasmic. Residues 379–399 traverse the membrane as a helical segment; the sequence is SASASGFGLLIIGVLLLLVLV. The Cytoplasmic portion of the chain corresponds to 400–416; that stretch reads ELRRFRQTPPQVTASDS.

This sequence belongs to the major facilitator superfamily. EntS (TC 2.A.1.38) family.

The protein localises to the cell inner membrane. Functionally, component of an export pathway for enterobactin. In Escherichia coli (strain 55989 / EAEC), this protein is Enterobactin exporter EntS.